The primary structure comprises 192 residues: Fe/S biogenesis protein NfuA (192 aa).

Cys-149 and Cys-152 together coordinate [4Fe-4S] cluster.

Belongs to the NfuA family. As to quaternary structure, homodimer. [4Fe-4S] cluster serves as cofactor.

Involved in iron-sulfur cluster biogenesis. Binds a 4Fe-4S cluster, can transfer this cluster to apoproteins, and thereby intervenes in the maturation of Fe/S proteins. Could also act as a scaffold/chaperone for damaged Fe/S proteins. The chain is Fe/S biogenesis protein NfuA from Shewanella denitrificans (strain OS217 / ATCC BAA-1090 / DSM 15013).